Reading from the N-terminus, the 228-residue chain is uncharacterized protein (228 aa).

Residues 5–119 (HILIVEDEEK…ELLARIRAAL (115 aa)) form the Response regulatory domain. At aspartate 54 the chain carries 4-aspartylphosphate. Residues 130–228 (GTFLTYDDLR…IRGVGYAIKG (99 aa)) constitute a DNA-binding region (ompR/PhoB-type).

Post-translationally, phosphorylated by YkoH.

It is found in the cytoplasm. In terms of biological role, probable member of the two-component regulatory system YkoH/YkoG. This is an uncharacterized protein from Bacillus subtilis (strain 168).